The sequence spans 255 residues: Aliphatic sulfonates import ATP-binding protein SsuB (255 aa).

The ABC transporter domain occupies 7-231 (IKEKAFVQEG…PRNRTTPDFQ (225 aa)). Residue 39–46 (GPSGCGKS) coordinates ATP.

Belongs to the ABC transporter superfamily. Aliphatic sulfonates importer (TC 3.A.1.17.2) family. In terms of assembly, the complex is composed of two ATP-binding proteins (SsuB), two transmembrane proteins (SsuC) and a solute-binding protein (SsuA).

It is found in the cell membrane. The enzyme catalyses ATP + H2O + aliphatic sulfonate-[sulfonate-binding protein]Side 1 = ADP + phosphate + aliphatic sulfonateSide 2 + [sulfonate-binding protein]Side 1.. Functionally, part of the ABC transporter complex SsuABC involved in aliphatic sulfonates import. Responsible for energy coupling to the transport system. Is also involved in taurine transport. In Bacillus subtilis (strain 168), this protein is Aliphatic sulfonates import ATP-binding protein SsuB.